The primary structure comprises 316 residues: Transaldolase (316 aa).

K132 serves as the catalytic Schiff-base intermediate with substrate.

It belongs to the transaldolase family. Type 1 subfamily.

It localises to the cytoplasm. It carries out the reaction D-sedoheptulose 7-phosphate + D-glyceraldehyde 3-phosphate = D-erythrose 4-phosphate + beta-D-fructose 6-phosphate. It functions in the pathway carbohydrate degradation; pentose phosphate pathway; D-glyceraldehyde 3-phosphate and beta-D-fructose 6-phosphate from D-ribose 5-phosphate and D-xylulose 5-phosphate (non-oxidative stage): step 2/3. Transaldolase is important for the balance of metabolites in the pentose-phosphate pathway. In Methylomonas aminofaciens, this protein is Transaldolase.